The sequence spans 97 residues: Large ribosomal subunit protein bL27 (97 aa).

A propeptide spanning residues 1 to 12 is cleaved from the precursor; sequence MLNLNLANLQFM. The tract at residues 15–37 is disordered; the sequence is KKGGGSTSNGRDSQAKRLGAKAA.

This sequence belongs to the bacterial ribosomal protein bL27 family. The N-terminus is cleaved by ribosomal processing cysteine protease Prp.

The chain is Large ribosomal subunit protein bL27 from Streptococcus suis (strain 98HAH33).